A 465-amino-acid chain; its full sequence is Argininosuccinate lyase (465 aa).

It belongs to the lyase 1 family. Argininosuccinate lyase subfamily.

It is found in the cytoplasm. The catalysed reaction is 2-(N(omega)-L-arginino)succinate = fumarate + L-arginine. Its pathway is amino-acid biosynthesis; L-arginine biosynthesis; L-arginine from L-ornithine and carbamoyl phosphate: step 3/3. In Deinococcus deserti (strain DSM 17065 / CIP 109153 / LMG 22923 / VCD115), this protein is Argininosuccinate lyase.